The chain runs to 488 residues: Proline--tRNA ligase (488 aa).

This sequence belongs to the class-II aminoacyl-tRNA synthetase family. ProS type 3 subfamily. In terms of assembly, homodimer.

The protein localises to the cytoplasm. It carries out the reaction tRNA(Pro) + L-proline + ATP = L-prolyl-tRNA(Pro) + AMP + diphosphate. Functionally, catalyzes the attachment of proline to tRNA(Pro) in a two-step reaction: proline is first activated by ATP to form Pro-AMP and then transferred to the acceptor end of tRNA(Pro). This chain is Proline--tRNA ligase, found in Borrelia garinii subsp. bavariensis (strain ATCC BAA-2496 / DSM 23469 / PBi) (Borreliella bavariensis).